A 179-amino-acid polypeptide reads, in one-letter code: CDP-archaeol synthase (179 aa).

Transmembrane regions (helical) follow at residues 53-73, 88-108, 120-140, and 145-165; these read FVGG…IEKL, FTLT…GSFI, FLIV…SLYP, and LFTA…HMGI.

It belongs to the CDP-archaeol synthase family. It depends on Mg(2+) as a cofactor.

The protein resides in the cell membrane. The catalysed reaction is 2,3-bis-O-(geranylgeranyl)-sn-glycerol 1-phosphate + CTP + H(+) = CDP-2,3-bis-O-(geranylgeranyl)-sn-glycerol + diphosphate. Its pathway is membrane lipid metabolism; glycerophospholipid metabolism. Its function is as follows. Catalyzes the formation of CDP-2,3-bis-(O-geranylgeranyl)-sn-glycerol (CDP-archaeol) from 2,3-bis-(O-geranylgeranyl)-sn-glycerol 1-phosphate (DGGGP) and CTP. This reaction is the third ether-bond-formation step in the biosynthesis of archaeal membrane lipids. Can use CTP or dCTP, but not ATP, GTP or TTP. The chain is CDP-archaeol synthase from Archaeoglobus fulgidus (strain ATCC 49558 / DSM 4304 / JCM 9628 / NBRC 100126 / VC-16).